We begin with the raw amino-acid sequence, 164 residues long: UPF0304 protein HSM_1818 (164 aa).

Belongs to the UPF0304 family.

The polypeptide is UPF0304 protein HSM_1818 (Histophilus somni (strain 2336) (Haemophilus somnus)).